The following is a 107-amino-acid chain: METIDKIKQQINENPILLYMKGSPKFPSCGFSARAVEAIIQCQVPFGYVDILTNPDIRSELPKFANWPTFPQLWVEGELIGGCDIILEMFQKGELHTLLKETATKHG.

A Glutaredoxin domain is found at 4–106; the sequence is IDKIKQQINE…TLLKETATKH (103 aa). Position 21 (Lys-21) interacts with glutathione. Cys-29 contributes to the [2Fe-2S] cluster binding site. Glutathione contacts are provided by residues Arg-58, Phe-70, and 83 to 84; that span reads CD.

This sequence belongs to the glutaredoxin family. Monothiol subfamily. As to quaternary structure, homodimer.

Its subcellular location is the cytoplasm. Functionally, monothiol glutaredoxin involved in the biogenesis of iron-sulfur clusters. This Haemophilus ducreyi (strain 35000HP / ATCC 700724) protein is Glutaredoxin 4 (grxD).